Consider the following 476-residue polypeptide: RuvB-like helicase 2 (476 aa).

76 to 83 is an ATP binding site; it reads GPPSTGKT.

This sequence belongs to the RuvB family. May form heterododecamers with RVB1. Component of the SWR1 chromatin remodeling complex, the INO80 chromatin remodeling complex, and of the R2TP complex.

It localises to the nucleus. It catalyses the reaction ATP + H2O = ADP + phosphate + H(+). In terms of biological role, DNA helicase which participates in several chromatin remodeling complexes, including the SWR1 and the INO80 complexes. The SWR1 complex mediates the ATP-dependent exchange of histone H2A for the H2A variant HZT1 leading to transcriptional regulation of selected genes by chromatin remodeling. The INO80 complex remodels chromatin by shifting nucleosomes and is involved in DNA repair. Also involved in pre-rRNA processing. The chain is RuvB-like helicase 2 (RVB2) from Candida glabrata (strain ATCC 2001 / BCRC 20586 / JCM 3761 / NBRC 0622 / NRRL Y-65 / CBS 138) (Yeast).